We begin with the raw amino-acid sequence, 288 residues long: MGPTAAGKSDLGIELALALGGEVVNADSMQLYRGMDIGTAKVPLEQRRGVPHHLLDVWDVTRAADVASFQADARRVIDGLLAVGRTPVLVGGSGLYLRAALDDLTFPGTDPAVRARWERELASRGAPALHGELARLAPRAAAAILPTNGRRIVRALEVVELTGTFEATLPEHRSVYDVVQIGIDRTDLDERIVERVERMWGAGFPDEVRRLAEMGLREGRTASRALGYAQLLAWFDGAMDSAEEAKQATITATRRFARRQRSWFRRDERIVWLDQPDVTQVLRLVGSL.

2–9 (GPTAAGKS) provides a ligand contact to ATP. 4-9 (TAAGKS) is a binding site for substrate. The interaction with substrate tRNA stretch occupies residues 27 to 30 (DSMQ).

It belongs to the IPP transferase family. As to quaternary structure, monomer. It depends on Mg(2+) as a cofactor.

The catalysed reaction is adenosine(37) in tRNA + dimethylallyl diphosphate = N(6)-dimethylallyladenosine(37) in tRNA + diphosphate. In terms of biological role, catalyzes the transfer of a dimethylallyl group onto the adenine at position 37 in tRNAs that read codons beginning with uridine, leading to the formation of N6-(dimethylallyl)adenosine (i(6)A). The polypeptide is tRNA dimethylallyltransferase (Frankia alni (strain DSM 45986 / CECT 9034 / ACN14a)).